Reading from the N-terminus, the 434-residue chain is (3,5-dihydroxyphenyl)acetyl-CoA 1,2-dioxygenase (434 aa).

Residues aspartate 184, glutamate 190, 223-226 (HPRY), 234-239 (AGINLK), glycine 293, 322-324 (IPG), and glutamine 413 each bind substrate.

This sequence belongs to the enoyl-CoA hydratase/isomerase family. In terms of assembly, homohexamer; dimer of trimers.

The catalysed reaction is (3,5-dihydroxyphenyl)acetyl-CoA + O2 = 2-(3,5-dihydroxyphenyl)-2-oxoacetate + CoA + H(+). Its function is as follows. Involved in the biosynthesis of the nonproteinogenic amino acid monomer (S)-3,5-dihydroxyphenylglycine (Dpg) responsible of the production of vancomycin and teicoplanin antibiotics. Catalyzes the unusual conversion 3,5-dihydroxyphenylacetyl-CoA (DPA-CoA) to 3,5-dihydroxyphenylglyoxylate. DpgC performed a net four-electron oxidation of the benzylic carbon of DPA-CoA and the hydrolysis of the thioester bond to generate free CoA. It can also use phenylacetyl-CoA (PA-CoA) as substrate. This is (3,5-dihydroxyphenyl)acetyl-CoA 1,2-dioxygenase (dpgC) from Amycolatopsis orientalis (Nocardia orientalis).